A 229-amino-acid polypeptide reads, in one-letter code: Large ribosomal subunit protein uL1 (229 aa).

This sequence belongs to the universal ribosomal protein uL1 family. As to quaternary structure, part of the 50S ribosomal subunit.

Binds directly to 23S rRNA. The L1 stalk is quite mobile in the ribosome, and is involved in E site tRNA release. In terms of biological role, protein L1 is also a translational repressor protein, it controls the translation of the L11 operon by binding to its mRNA. The protein is Large ribosomal subunit protein uL1 of Pasteurella multocida (strain Pm70).